Reading from the N-terminus, the 204-residue chain is MKFSSVTAITLATVATVATAKKGEHDFTTTLTLSSDGSLTTTTSTHTTHKYGKFNKTSKSKTPNHTGTHKYGKFNKTSKSKTPNHTGTHKYGKFNKTSKSKTPNHTGTHKYGKFNKTSKSKTPNHTGTHKYGKFNKTSKSKTPNHTGTHKYGKFNKTKHDTTTYGPGEKARKNNAAPGPSNFNSIKLFGVTAGSAAVAGALLLL.

Positions 1-20 (MKFSSVTAITLATVATVATA) are cleaved as a signal peptide. Residues 35–46 (SDGSLTTTTSTH) are compositionally biased toward low complexity. The disordered stretch occupies residues 35–179 (SDGSLTTTTS…ARKNNAAPGP (145 aa)). Over residues 47–59 (TTHKYGKFNKTSK) the composition is skewed to basic residues. N55, N64, N75, N84, N95, N104, N115, N124, N135, N144, and N155 each carry an N-linked (GlcNAc...) asparagine glycan. Over residues 67-79 (GTHKYGKFNKTSK) the composition is skewed to basic residues. The segment covering 87–99 (GTHKYGKFNKTSK) has biased composition (basic residues). A compositionally biased stretch (basic residues) spans 107-119 (GTHKYGKFNKTSK). Residues 127–139 (GTHKYGKFNKTSK) are compositionally biased toward basic residues. Residues 147 to 156 (GTHKYGKFNK) are compositionally biased toward basic residues. Residue N174 is the site of GPI-anchor amidated asparagine attachment. A propeptide spans 175–204 (AAPGPSNFNSIKLFGVTAGSAAVAGALLLL) (removed in mature form).

The protein belongs to the PGA14 family. Post-translationally, the GPI-anchor is attached to the protein in the endoplasmic reticulum and serves to target the protein to the cell surface. There, the glucosamine-inositol phospholipid moiety is cleaved off and the GPI-modified mannoprotein is covalently attached via its lipidless GPI glycan remnant to the 1,6-beta-glucan of the outer cell wall layer.

Its subcellular location is the secreted. It is found in the cell wall. The protein localises to the membrane. Its function is as follows. Hydrophilin which is essential to overcome the simple stress of the desiccation-rehydration process. The chain is Hydrophilin YNL190W from Saccharomyces cerevisiae (strain ATCC 204508 / S288c) (Baker's yeast).